The sequence spans 673 residues: Xyloglucan glycosyltransferase 4 (673 aa).

A run of 2 helical transmembrane segments spans residues 90-110 (FIKA…VAHF) and 144-164 (IAPL…IQSL). The active site involves D238. Positions 297 and 299 each coordinate substrate. D391 is an active-site residue. Helical transmembrane passes span 469–489 (LILP…TMFI) and 494–514 (LPLW…ILPS). S581 bears the Phosphoserine mark. 2 helical membrane passes run 623 to 643 (VFKK…RSFL) and 648 to 668 (LHFY…LDLI).

The protein belongs to the glycosyltransferase 2 family. Plant cellulose synthase-like C subfamily. As to quaternary structure, homodimer. Interacts with XXT5. Interacts with FUT1, MUR3 and XLT2. In terms of tissue distribution, expressed in seedlings, roots, leaves, stems, flowers and seeds.

It localises to the golgi apparatus membrane. Beta-1,4-glucan synthase rather involved in the synthesis of the xyloglucan backbone than cellulose. Seems to work simultaneously with xyloglucan 6-xylosyltransferase. Xyloglucan is a noncellulosic polysaccharides of plant cell wall and consists of a glucan backbone substituted by xylose, galactose and fucose. Associates with other xyloglucan-synthesizing enzymes to form multiprotein complexes for xyloglucan synthesis in the Golgi. The sequence is that of Xyloglucan glycosyltransferase 4 from Arabidopsis thaliana (Mouse-ear cress).